Consider the following 380-residue polypeptide: MTTFNTVTRHPNYYTSYTKIAPKDYIISRLKALKAKIAKVNPMAIRDNKWSDLHIAVGAKELKLVKALCNEKNINATDAKCRTPLELAILGNDLETVKFLVQMGGKIAPNMYGWSAIHLAIKIDNVEMVEYLYENTEFQKYDKYGYTLHDWAEAMGRGEIVRFFHDKNHNNKTPLELAVESKNISSVKALIIKGAKFDIKSELGYKIFELAIDSEDMKLIEYLVNHTLVGKNTGQQTLLEKVAQIYDKNINLSKLVKVLIKDNAGFDKALGQKLLQKAIYADDLELVETLYSKGVDAQYKDQLGRSGLHHAIKANCGEELIQFLIEHTTDINYRDKSGLNPLGLAKSNNCTVATKLLLEAGAYESYMYDDVIKVLGEYGY.

ANK repeat units lie at residues 48 to 76 (NKWS…NINA), 80 to 109 (KCRT…KIAP), 112 to 143 (YGWS…KYDK), 170 to 199 (NNKT…KFDI), 203 to 233 (LGYK…GKNT), 239 to 268 (LEKV…GFDK), 270 to 299 (LGQK…DAQY), 303 to 333 (LGRS…DINY), and 337 to 366 (SGLN…YESY).

The polypeptide is Putative ankyrin repeat protein RF_1306 (Rickettsia felis (strain ATCC VR-1525 / URRWXCal2) (Rickettsia azadi)).